The chain runs to 73 residues: Putative antitoxin VapB9 (73 aa).

Antitoxin component of a possible type II toxin-antitoxin (TA) system. The cognate toxin is VapC9. The chain is Putative antitoxin VapB9 (vapB9) from Mycobacterium tuberculosis (strain CDC 1551 / Oshkosh).